Here is a 229-residue protein sequence, read N- to C-terminus: Protein TraJ (229 aa).

The protein localises to the cytoplasm. Its function is as follows. This protein is essential for positively regulating the expression of transfer genes that are involved in the conjugal transfer of DNA between bacterial cells. This Escherichia coli (strain K12) protein is Protein TraJ (traJ).